A 332-amino-acid polypeptide reads, in one-letter code: L-lactate dehydrogenase A chain (332 aa).

NAD(+)-binding positions include 29–57 and R99; that span reads GMVG…MEDK. Substrate-binding residues include R106, N138, and R169. An NAD(+)-binding site is contributed by N138. The active-site Proton acceptor is the H193. T248 lines the substrate pocket.

It belongs to the LDH/MDH superfamily. LDH family. In terms of assembly, homotetramer.

It is found in the cytoplasm. It catalyses the reaction (S)-lactate + NAD(+) = pyruvate + NADH + H(+). Its pathway is fermentation; pyruvate fermentation to lactate; (S)-lactate from pyruvate: step 1/1. Interconverts simultaneously and stereospecifically pyruvate and lactate with concomitant interconversion of NADH and NAD(+). This is L-lactate dehydrogenase A chain (ldha) from Gillichthys seta (Shortjaw mudsucker).